Here is a 337-residue protein sequence, read N- to C-terminus: Phosphate acyltransferase (337 aa).

Belongs to the PlsX family. In terms of assembly, homodimer. Probably interacts with PlsY.

The protein localises to the cytoplasm. It catalyses the reaction a fatty acyl-[ACP] + phosphate = an acyl phosphate + holo-[ACP]. It participates in lipid metabolism; phospholipid metabolism. Catalyzes the reversible formation of acyl-phosphate (acyl-PO(4)) from acyl-[acyl-carrier-protein] (acyl-ACP). This enzyme utilizes acyl-ACP as fatty acyl donor, but not acyl-CoA. This Polynucleobacter asymbioticus (strain DSM 18221 / CIP 109841 / QLW-P1DMWA-1) (Polynucleobacter necessarius subsp. asymbioticus) protein is Phosphate acyltransferase.